The primary structure comprises 420 residues: Phosphoribosylamine--glycine ligase (420 aa).

Residues 108-314 enclose the ATP-grasp domain; the sequence is KEIMVKYGVS…FAQNITDILD (207 aa). 134–195 is a binding site for ATP; it reads IEKHGAPIVV…EEFLEGEEFS (62 aa). Positions 284 and 286 each coordinate Mg(2+).

This sequence belongs to the GARS family. The cofactor is Mg(2+). Mn(2+) is required as a cofactor.

It catalyses the reaction 5-phospho-beta-D-ribosylamine + glycine + ATP = N(1)-(5-phospho-beta-D-ribosyl)glycinamide + ADP + phosphate + H(+). Its pathway is purine metabolism; IMP biosynthesis via de novo pathway; N(1)-(5-phospho-D-ribosyl)glycinamide from 5-phospho-alpha-D-ribose 1-diphosphate: step 2/2. This is Phosphoribosylamine--glycine ligase from Streptococcus pneumoniae (strain ATCC BAA-255 / R6).